Here is a 776-residue protein sequence, read N- to C-terminus: Probable E3 ubiquitin-protein ligase HECTD2 (776 aa).

Residues 1-46 form a disordered region; the sequence is MSEAVRVPSPATPLVVAAPAPEERKGKESEREKLPPIVSAGAGATA. Residues 7-20 show a composition bias toward low complexity; sequence VPSPATPLVVAAPA. The residue at position 9 (serine 9) is a Phosphoserine. Residues 21–34 show a composition bias toward basic and acidic residues; sequence PEERKGKESEREKL. The 340-residue stretch at 437–776 folds into the HECT domain; that stretch reads KRADLKKKLK…ISNSEGFGLE (340 aa). Cysteine 744 (glycyl thioester intermediate) is an active-site residue.

It carries out the reaction S-ubiquitinyl-[E2 ubiquitin-conjugating enzyme]-L-cysteine + [acceptor protein]-L-lysine = [E2 ubiquitin-conjugating enzyme]-L-cysteine + N(6)-ubiquitinyl-[acceptor protein]-L-lysine.. Its pathway is protein modification; protein ubiquitination. In terms of biological role, E3 ubiquitin-protein ligase which accepts ubiquitin from an E2 ubiquitin-conjugating enzyme in the form of a thioester and then directly transfers the ubiquitin to targeted substrates. (Microbial infection) Catalyzes ubiquitination of Botulinum neurotoxin A light chain (LC) of C.botulinum neurotoxin type A (BoNT/A). The protein is Probable E3 ubiquitin-protein ligase HECTD2 of Homo sapiens (Human).